A 197-amino-acid polypeptide reads, in one-letter code: RNA-binding protein with multiple splicing (197 aa).

Met-1 carries the N-acetylmethionine modification. At Thr-12 the chain carries Phosphothreonine. Residues 24–101 form the RRM domain; it reads RTLFVSGLPL…QTLRLEFAKA (78 aa). Residues 98–105 form an interaction with RNA region; it reads FAKANTKM. Phosphothreonine is present on Thr-113.

Homodimer; each protein chain binds one RNA molecule via the external surface of the homodimer. Interacts with RNA binding proteins MBNL1, RBFOX2, RBM4 and RBM14; the interaction allows cooperative assembly of stable cell-specific alternative splicing regulatory complexes. Also interacts with RBM47, MATR3 and ESRP2. Interacts with SMAD2, SMAD3 and SMAD4; the interactions are direct. As to expression, mRNA expressed in developing heart, with significantly higher expression in the atria relative to the ventricles.

The protein resides in the nucleus. The protein localises to the cytoplasm. Its subcellular location is the stress granule. It is found in the P-body. Its function is as follows. RNA binding protein that mediates the regulation of pre-mRNA alternative splicing (AS). Acts either as activator (FLNB, HSPG2, LIPA1, MYOCD, PTPRF and PPFIBP1) or repressor (TPM1, ACTN1, ITGA7, PIEZO1, LSM14B, MBNL1 and MBML2) of splicing events on specific pre-mRNA targets. Together with RNA binding proteins RBFOX2 and MBNL1/2, activates a splicing program associated with differentiated contractile vascular smooth muscle cells (SMC) by regulating AS of numerous pre-mRNA involved in actin cytoskeleton and focal adhesion machineries, suggesting a role in promoting a cell differentiated state. Binds to introns, exons and 3'-UTR associated with tandem CAC trinucleotide motifs separated by a variable spacer region, at a minimum as a dimer. The minimal length of RNA required for RBPMS-binding tandem CAC motifs is 15 nt, with spacing ranging from 1 to 9 nt. Can also bind to CA dinucleotide repeats. Mediates repression of TPM1 exon 3 by binding to CAC tandem repeats in the flanking intronic regions, followed by higher-order oligomerization and heterotypic interactions with other splicing regulators including MBNL1 and RBFOX2, which prevents assembly of ATP-dependent splicing complexes. In Mus musculus (Mouse), this protein is RNA-binding protein with multiple splicing.